We begin with the raw amino-acid sequence, 65 residues long: Toxin Co52 (65 aa).

The LCN-type CS-alpha/beta domain maps to 2–65 (EDGYLVDKTG…PTWPLPNKTC (64 aa)). Cystine bridges form between C12–C65, C16–C41, C25–C46, and C29–C48.

As to expression, expressed by the venom gland.

The protein localises to the secreted. Its function is as follows. Beta toxins bind voltage-independently at site-4 of sodium channels (Nav) and shift the voltage of activation toward more negative potentials thereby affecting sodium channel activation and promoting spontaneous and repetitive firing. Not toxic to mice, chicks, crickets or woodlice (at 5 ug). The polypeptide is Toxin Co52 (Centruroides ornatus (Scorpion)).